Here is a 546-residue protein sequence, read N- to C-terminus: Pre-mRNA-splicing factor 38B (546 aa).

The span at 1–14 shows a compositional bias: polar residues; sequence MANNSPALTGNSQP. The tract at residues 1-40 is disordered; that stretch reads MANNSPALTGNSQPQHQAAAAAAQQQQQCGGGGATKPAVS. Alanine 2 is subject to N-acetylalanine. Residue serine 5 is modified to Phosphoserine. Residues 15–28 are compositionally biased toward low complexity; it reads QHQAAAAAAQQQQQ. An N6-acetyllysine modification is found at lysine 227. The interval 229–546 is disordered; that stretch reads IDQQIKTRPR…KQHKNKDETV (318 aa). Over residues 243–255 the composition is skewed to basic and acidic residues; it reads DGKEGAEEIDRHV. Positions 256 to 284 are enriched in basic residues; it reads ERRRSRSPRRSLSPRRSPRRSRSRSHHRE. Serine 288, serine 290, serine 318, and serine 320 each carry phosphoserine. The span at 291–327 shows a compositional bias: basic and acidic residues; that stretch reads FDRELEREKERQRLEREAKEREKERRRSRSIDRGLER. Residues 292-321 are a coiled coil; sequence DRELEREKERQRLEREAKEREKERRRSRSI. Residues 328 to 344 are compositionally biased toward basic residues; sequence RRSRSRERHRSRSRSRD. A compositionally biased stretch (basic and acidic residues) spans 345–421; sequence RKGDRRDRDR…HRDDKRDSKK (77 aa). Residues 422-450 show a composition bias toward basic residues; that stretch reads EKKHSRSRSRERKHRSRSRSRNAGKRSRS. Residue serine 448 is modified to Phosphoserine. Positions 451-468 are enriched in basic and acidic residues; the sequence is RSKEKSSKHKNESKEKSN. Phosphoserine is present on residues serine 473, serine 475, and serine 481. Positions 480 to 495 are enriched in basic and acidic residues; the sequence is DSVEKSKKREHSPSKE. The segment covering 496 to 510 has biased composition (basic residues); that stretch reads KSRKRSRSKERSHKR. Basic and acidic residues predominate over residues 511–546; sequence DHSDSKDQSDKHDRRRSQSIEQESQEKQHKNKDETV. 3 positions are modified to phosphoserine: serine 527, serine 529, and serine 534.

It belongs to the PRP38 family.

The protein resides in the nucleus. Functionally, may be required for pre-mRNA splicing. This chain is Pre-mRNA-splicing factor 38B (PRPF38B), found in Homo sapiens (Human).